We begin with the raw amino-acid sequence, 125 residues long: Large ribosomal subunit protein bL17 (125 aa).

The protein belongs to the bacterial ribosomal protein bL17 family. As to quaternary structure, part of the 50S ribosomal subunit. Contacts protein L32.

The chain is Large ribosomal subunit protein bL17 from Acinetobacter baylyi (strain ATCC 33305 / BD413 / ADP1).